The primary structure comprises 1390 residues: DNA-directed RNA polymerase subunit beta (1390 aa).

The protein belongs to the RNA polymerase beta chain family. The RNAP catalytic core consists of 2 alpha, 1 beta, 1 beta' and 1 omega subunit. When a sigma factor is associated with the core the holoenzyme is formed, which can initiate transcription.

The enzyme catalyses RNA(n) + a ribonucleoside 5'-triphosphate = RNA(n+1) + diphosphate. Its function is as follows. DNA-dependent RNA polymerase catalyzes the transcription of DNA into RNA using the four ribonucleoside triphosphates as substrates. The chain is DNA-directed RNA polymerase subunit beta from Rhodopseudomonas palustris (strain HaA2).